A 143-amino-acid polypeptide reads, in one-letter code: Hemoglobin subunit alpha-2 (143 aa).

N-acetylserine is present on Ser-2. The Globin domain occupies 2 to 143; that stretch reads SLSTKDKDTV…LARALSEKYR (142 aa). Heme b-binding residues include His-60 and His-89.

It belongs to the globin family. In terms of assembly, hb 2 is a heterotetramer of two alpha-2 and two beta chains. Red blood cells.

Involved in oxygen transport from gills to the various peripheral tissues. The protein is Hemoglobin subunit alpha-2 of Cottoperca gobio (Frogmouth).